The sequence spans 996 residues: Receptor-like protein kinase HSL1 (996 aa).

The first 15 residues, 1-15 (MYLLFLFLLFPTVFS), serve as a signal peptide directing secretion. The Extracellular segment spans residues 16 to 618 (LNQDGFILQQ…ENEAKKRGYV (603 aa)). 22 LRR repeats span residues 59–83 (FSSVTSVDLSSANLAGPFPSVICRL), 84–107 (SNLAHLSLYNNSINSTLPLNIAAC), 109–131 (SLQTLDLSQNLLTGELPQTLADI), 133–154 (TLVHLDLTGNNFSGDIPASFGK), 155–178 (FENLEVLSLVYNLLDGTIPPFLGN), 179–203 (ISTLKMLNLSYNPFSPSRIPPEFGN), 205–228 (TNLEVMWLTECHLVGQIPDSLGQL), 229–252 (SKLVDLDLALNDLVGHIPPSLGGL), 253–276 (TNVVQIELYNNSLTGEIPPELGNL), 278–299 (SLRLLDASMNQLTGKIPDELCR), 300–323 (VPLESLNLYENNLEGELPASIALS), 325–347 (NLYEIRIFGNRLTGGLPKDLGLN), 348–371 (SPLRWLDVSENEFSGDLPADLCAK), 373–395 (ELEELLIIHNSFSGVIPESLADC), 396–419 (RSLTRIRLAYNRFSGSVPTGFWGL), 421–443 (HVNLLELVNNSFSGEISKSIGGA), 444–467 (SNLSLLILSNNEFTGSLPEEIGSL), 468–491 (DNLNQLSASGNKFSGSLPDSLMSL), 493–515 (ELGTLDLHGNQFSGELTSGIKSW), 516–539 (KKLNELNLADNEFTGKIPDEIGSL), 541–562 (VLNYLDLSGNMFSGKIPVSLQS), and 563–586 (LKLNQLNLSYNRLSGDLPPSLAKD). N-linked (GlcNAc...) asparagine glycosylation is found at Asn93 and Asn97. Residues Asn143, Asn178, Asn186, and Asn203 are each glycosylated (N-linked (GlcNAc...) asparagine). N-linked (GlcNAc...) asparagine glycosylation is present at Asn262. Asn429 and Asn445 each carry an N-linked (GlcNAc...) asparagine glycan. Asn569 carries an N-linked (GlcNAc...) asparagine glycan. The helical transmembrane segment at 619–639 (WLLRSIFVLAAMVLLAGVAWF) threads the bilayer. Residues 640-996 (YFKYRTFKKA…EDTSDQGSIA (357 aa)) are Cytoplasmic-facing. Positions 676 to 962 (LDEDNVIGAG…RRVVKMLQEI (287 aa)) constitute a Protein kinase domain. Residues 682–690 (IGAGASGKV) and Lys704 each bind ATP. Phosphotyrosine occurs at positions 764 and 802. Asp815 serves as the catalytic Proton acceptor. Residue Ser851 is modified to Phosphoserine. 2 positions are modified to phosphotyrosine: Tyr859 and Tyr866. The residue at position 867 (Thr867) is a Phosphothreonine. The tract at residues 967-996 (EDSLHKIRDDKDGKLTPYYNEDTSDQGSIA) is disordered. Over residues 968 to 980 (DSLHKIRDDKDGK) the composition is skewed to basic and acidic residues.

This sequence belongs to the protein kinase superfamily. Ser/Thr protein kinase family.

Its subcellular location is the cell membrane. The enzyme catalyses L-seryl-[protein] + ATP = O-phospho-L-seryl-[protein] + ADP + H(+). It catalyses the reaction L-threonyl-[protein] + ATP = O-phospho-L-threonyl-[protein] + ADP + H(+). This Arabidopsis thaliana (Mouse-ear cress) protein is Receptor-like protein kinase HSL1 (HSL1).